Consider the following 343-residue polypeptide: Dimethyladenosine transferase 1, mitochondrial (343 aa).

A mitochondrion-targeting transit peptide spans Met-1 to Val-27. S-adenosyl-L-methionine-binding residues include Leu-38, Gly-63, Glu-85, Lys-86, Asp-111, Val-112, and Asn-141.

The protein belongs to the class I-like SAM-binding methyltransferase superfamily. rRNA adenine N(6)-methyltransferase family. KsgA subfamily. Interacts with mitochondrial RNA polymerase POLRMT. Interacts with TFAM. Bound to the maturing mtSSU until the late stages of assembly.

It localises to the mitochondrion. The enzyme catalyses adenosine(N)/adenosine(N+1) in rRNA + 4 S-adenosyl-L-methionine = N(6)-dimethyladenosine(N)/N(6)-dimethyladenosine(N+1) in rRNA + 4 S-adenosyl-L-homocysteine + 4 H(+). Functionally, S-adenosyl-L-methionine-dependent methyltransferase which specifically dimethylates mitochondrial 12S rRNA at the conserved stem loop. Also required for basal transcription of mitochondrial DNA, probably via its interaction with POLRMT and TFAM. Stimulates transcription independently of the methyltransferase activity. Mitochondrial methyltransferase which uses S-adenosyl methionine to dimethylate two highly conserved adjacent adenosine residues (A1583 and A1584) within the loop of helix 45 at the 3-prime end of 12S rRNA, thereby regulating the assembly or stability of the small subunit of the mitochondrial ribosome. Also required for basal transcription of mitochondrial DNA, probably via its interaction with POLRMT and TFAM. Stimulates transcription independently of the methyltransferase activity. The chain is Dimethyladenosine transferase 1, mitochondrial (TFB1M) from Pongo abelii (Sumatran orangutan).